The following is a 794-amino-acid chain: Sucrose synthase (794 aa).

A GT-B glycosyltransferase region spans residues 263-742 (MISRLLILSP…ALDRVASRYT (480 aa)).

The protein belongs to the glycosyltransferase 1 family. As to quaternary structure, homotetramer.

It catalyses the reaction an NDP-alpha-D-glucose + D-fructose = a ribonucleoside 5'-diphosphate + sucrose + H(+). The catalysed reaction is ADP-alpha-D-glucose + D-fructose = sucrose + ADP + H(+). Its activity is regulated as follows. Inhibited by GDP over 10 mM and by over 2 mM MgCl(2). In terms of biological role, catalyzes the reversible conversion of sucrose and a nucleotide disphosphate (NDP) into fructose and NDP-glucose; although the reaction is freely reversible in vitro, the physiological reaction seems to be sucrose cleavage. Unlike characterized plant enzymes prefers ADP as a cosubstrate, whereas plants prefer UDP. The KM for sucrose is 8-fold lower in the presence of ADP than UDP. Its preference for ADP over UDP suggests it may directly link sucrose and glycogen metabolism. This is Sucrose synthase (ss2) from Nitrosomonas europaea (strain ATCC 19718 / CIP 103999 / KCTC 2705 / NBRC 14298).